The following is a 430-amino-acid chain: CinA-like protein (430 aa).

Belongs to the CinA family.

The protein is CinA-like protein of Prochlorococcus marinus (strain NATL1A).